Reading from the N-terminus, the 254-residue chain is Glucosamine-6-phosphate deaminase (254 aa).

Asp65 (proton acceptor; for enolization step) is an active-site residue. The active-site For ring-opening step is Asn134. His136 functions as the Proton acceptor; for ring-opening step in the catalytic mechanism. Glu141 serves as the catalytic For ring-opening step.

Belongs to the glucosamine/galactosamine-6-phosphate isomerase family. NagB subfamily.

It catalyses the reaction alpha-D-glucosamine 6-phosphate + H2O = beta-D-fructose 6-phosphate + NH4(+). It participates in amino-sugar metabolism; N-acetylneuraminate degradation; D-fructose 6-phosphate from N-acetylneuraminate: step 5/5. Functionally, catalyzes the reversible isomerization-deamination of glucosamine 6-phosphate (GlcN6P) to form fructose 6-phosphate (Fru6P) and ammonium ion. This is Glucosamine-6-phosphate deaminase from Corynebacterium aurimucosum (strain ATCC 700975 / DSM 44827 / CIP 107346 / CN-1) (Corynebacterium nigricans).